The chain runs to 89 residues: Acylphosphatase (89 aa).

Residues 3-89 form the Acylphosphatase-like domain; that stretch reads ALFIKISGRV…QNFTSFDIVP (87 aa). Catalysis depends on residues Arg18 and Asn36.

It belongs to the acylphosphatase family.

The enzyme catalyses an acyl phosphate + H2O = a carboxylate + phosphate + H(+). The sequence is that of Acylphosphatase (acyP) from Pseudothermotoga lettingae (strain ATCC BAA-301 / DSM 14385 / NBRC 107922 / TMO) (Thermotoga lettingae).